Reading from the N-terminus, the 261-residue chain is Glucose 1-dehydrogenase 4 (261 aa).

11–35 (VITGGSTGLGRAMAVRFGQEEAKVV) lines the NAD(+) pocket. Residue Ser-145 participates in substrate binding. Tyr-158 serves as the catalytic Proton acceptor.

It belongs to the short-chain dehydrogenases/reductases (SDR) family. Homotetramer.

It carries out the reaction D-glucose + NAD(+) = D-glucono-1,5-lactone + NADH + H(+). The enzyme catalyses D-glucose + NADP(+) = D-glucono-1,5-lactone + NADPH + H(+). The polypeptide is Glucose 1-dehydrogenase 4 (gdhIV) (Priestia megaterium (Bacillus megaterium)).